We begin with the raw amino-acid sequence, 176 residues long: Translation initiation factor IF-3 (176 aa).

The protein belongs to the IF-3 family. Monomer.

It localises to the cytoplasm. IF-3 binds to the 30S ribosomal subunit and shifts the equilibrium between 70S ribosomes and their 50S and 30S subunits in favor of the free subunits, thus enhancing the availability of 30S subunits on which protein synthesis initiation begins. This is Translation initiation factor IF-3 from Nitratidesulfovibrio vulgaris (strain DSM 19637 / Miyazaki F) (Desulfovibrio vulgaris).